The primary structure comprises 562 residues: Dihydroxy-acid dehydratase (562 aa).

C53 is a [2Fe-2S] cluster binding site. D85 serves as a coordination point for Mg(2+). Position 126 (C126) interacts with [2Fe-2S] cluster. Residues D127 and K128 each contribute to the Mg(2+) site. K128 is modified (N6-carboxylysine). C198 lines the [2Fe-2S] cluster pocket. E449 provides a ligand contact to Mg(2+). The Proton acceptor role is filled by S475.

This sequence belongs to the IlvD/Edd family. In terms of assembly, homodimer. The cofactor is [2Fe-2S] cluster. Mg(2+) is required as a cofactor.

It carries out the reaction (2R)-2,3-dihydroxy-3-methylbutanoate = 3-methyl-2-oxobutanoate + H2O. It catalyses the reaction (2R,3R)-2,3-dihydroxy-3-methylpentanoate = (S)-3-methyl-2-oxopentanoate + H2O. It participates in amino-acid biosynthesis; L-isoleucine biosynthesis; L-isoleucine from 2-oxobutanoate: step 3/4. Its pathway is amino-acid biosynthesis; L-valine biosynthesis; L-valine from pyruvate: step 3/4. Its function is as follows. Functions in the biosynthesis of branched-chain amino acids. Catalyzes the dehydration of (2R,3R)-2,3-dihydroxy-3-methylpentanoate (2,3-dihydroxy-3-methylvalerate) into 2-oxo-3-methylpentanoate (2-oxo-3-methylvalerate) and of (2R)-2,3-dihydroxy-3-methylbutanoate (2,3-dihydroxyisovalerate) into 2-oxo-3-methylbutanoate (2-oxoisovalerate), the penultimate precursor to L-isoleucine and L-valine, respectively. The polypeptide is Dihydroxy-acid dehydratase (Methylococcus capsulatus (strain ATCC 33009 / NCIMB 11132 / Bath)).